The sequence spans 160 residues: Nucleotide-binding protein AHA_1129 (160 aa).

It belongs to the YajQ family.

Functionally, nucleotide-binding protein. This Aeromonas hydrophila subsp. hydrophila (strain ATCC 7966 / DSM 30187 / BCRC 13018 / CCUG 14551 / JCM 1027 / KCTC 2358 / NCIMB 9240 / NCTC 8049) protein is Nucleotide-binding protein AHA_1129.